We begin with the raw amino-acid sequence, 256 residues long: 5-oxoprolinase subunit A 2 (256 aa).

Belongs to the LamB/PxpA family. Forms a complex composed of PxpA, PxpB and PxpC.

The catalysed reaction is 5-oxo-L-proline + ATP + 2 H2O = L-glutamate + ADP + phosphate + H(+). Functionally, catalyzes the cleavage of 5-oxoproline to form L-glutamate coupled to the hydrolysis of ATP to ADP and inorganic phosphate. This is 5-oxoprolinase subunit A 2 from Bradyrhizobium diazoefficiens (strain JCM 10833 / BCRC 13528 / IAM 13628 / NBRC 14792 / USDA 110).